A 193-amino-acid polypeptide reads, in one-letter code: Pre-histone-like nucleoprotein (193 aa).

Ser-2 bears the N-acetylserine; by host mark. A propeptide spanning residues 2 to 24 (SIFISPSNNTGWGLRAPSKMYGG) is cleaved from the precursor. Lys-48 is modified (N6-acetyllysine; by host). A Phosphothreonine; by host modification is found at Thr-55. A Nuclear localization signal motif is present at residues 183–193 (RVPVRTRPPRT).

The protein belongs to the adenoviridae histone-like nucleoprotein family. Interacts with the core-capsid bridging protein; this interaction bridges the virus core to the capsid. Interacts with host NPM1; this interaction might play a role in placing the pre-histone-like nucleoprotein on the viral DNA or regulating viral gene expression. Interacts with host HMGB1; this interaction inhibits host immune response. Post-translationally, cleaved near the N-terminus by the viral protease during virion maturation to form the mature protein.

It localises to the virion. The protein resides in the host nucleus. The protein localises to the host nucleolus. Functionally, plays a role in the inhibition of host immune response within the nucleus. Interacts with cellular nucleosomes and immobilizes the host immune danger signal HMGB1 on chromatin. In turn, prevents HMGB1 release out of the cell and thus decreases inflammation. Also plays a role in the wrapping and condensation of the viral DNA. May also promote viral genome import into the nucleus. The sequence is that of Pre-histone-like nucleoprotein from Homo sapiens (Human).